Consider the following 85-residue polypeptide: MNYLVMVSFALLLMTGVESVRDGYIALPHNCAYGCLLNEFCNDLCTKNGAKIGYCNIQGKYGNACWCIELPDNVPIRVPGRCHPS.

An N-terminal signal peptide occupies residues 1–19; the sequence is MNYLVMVSFALLLMTGVES. One can recognise an LCN-type CS-alpha/beta domain in the interval 21-83; it reads RDGYIALPHN…VPIRVPGRCH (63 aa). Disulfide bonds link cysteine 31–cysteine 82, cysteine 35–cysteine 55, cysteine 41–cysteine 65, and cysteine 45–cysteine 67.

The protein belongs to the long (4 C-C) scorpion toxin superfamily. Sodium channel inhibitor family. Alpha subfamily. Expressed by the venom gland.

The protein resides in the secreted. Its function is as follows. Alpha toxins bind voltage-independently at site-3 of sodium channels (Nav) and inhibit the inactivation of the activated channels, thereby blocking neuronal transmission. The sequence is that of Toxin BmKaTx10 from Olivierus martensii (Manchurian scorpion).